Here is a 156-residue protein sequence, read N- to C-terminus: ATP synthase subunit b (156 aa).

Residues 7 to 27 (LIAQFVVFFILAGFTMKFVWP) form a helical membrane-spanning segment.

This sequence belongs to the ATPase B chain family. As to quaternary structure, F-type ATPases have 2 components, F(1) - the catalytic core - and F(0) - the membrane proton channel. F(1) has five subunits: alpha(3), beta(3), gamma(1), delta(1), epsilon(1). F(0) has three main subunits: a(1), b(2) and c(10-14). The alpha and beta chains form an alternating ring which encloses part of the gamma chain. F(1) is attached to F(0) by a central stalk formed by the gamma and epsilon chains, while a peripheral stalk is formed by the delta and b chains.

It is found in the cell inner membrane. Functionally, f(1)F(0) ATP synthase produces ATP from ADP in the presence of a proton or sodium gradient. F-type ATPases consist of two structural domains, F(1) containing the extramembraneous catalytic core and F(0) containing the membrane proton channel, linked together by a central stalk and a peripheral stalk. During catalysis, ATP synthesis in the catalytic domain of F(1) is coupled via a rotary mechanism of the central stalk subunits to proton translocation. Its function is as follows. Component of the F(0) channel, it forms part of the peripheral stalk, linking F(1) to F(0). This is ATP synthase subunit b from Herminiimonas arsenicoxydans.